The following is a 228-amino-acid chain: 7-cyano-7-deazaguanine synthase (228 aa).

8 to 18 (LSGGMDSATTL) contacts ATP. The Zn(2+) site is built by Cys-188, Cys-198, Cys-201, and Cys-204.

The protein belongs to the QueC family. Zn(2+) serves as cofactor.

It carries out the reaction 7-carboxy-7-deazaguanine + NH4(+) + ATP = 7-cyano-7-deazaguanine + ADP + phosphate + H2O + H(+). It functions in the pathway purine metabolism; 7-cyano-7-deazaguanine biosynthesis. Functionally, catalyzes the ATP-dependent conversion of 7-carboxy-7-deazaguanine (CDG) to 7-cyano-7-deazaguanine (preQ(0)). This is 7-cyano-7-deazaguanine synthase from Nitrosomonas europaea (strain ATCC 19718 / CIP 103999 / KCTC 2705 / NBRC 14298).